Consider the following 21-residue polypeptide: Fibrinogen beta chain (21 aa).

Glutamine 1 carries the post-translational modification Pyrrolidone carboxylic acid. Tyrosine 6 carries the post-translational modification Sulfotyrosine.

Heterohexamer; disulfide linked. Contains 2 sets of 3 non-identical chains (alpha, beta and gamma). The 2 heterotrimers are in head to head conformation with the N-termini in a small central domain. Post-translationally, conversion of fibrinogen to fibrin is triggered by thrombin, which cleaves fibrinopeptides A and B from alpha and beta chains, and thus exposes the N-terminal polymerization sites responsible for the formation of the soft clot.

The protein resides in the secreted. Functionally, cleaved by the protease thrombin to yield monomers which, together with fibrinogen alpha (FGA) and fibrinogen gamma (FGG), polymerize to form an insoluble fibrin matrix. Fibrin has a major function in hemostasis as one of the primary components of blood clots. In addition, functions during the early stages of wound repair to stabilize the lesion and guide cell migration during re-epithelialization. Was originally thought to be essential for platelet aggregation, based on in vitro studies using anticoagulated blood. However subsequent studies have shown that it is not absolutely required for thrombus formation in vivo. Enhances expression of SELP in activated platelets. Maternal fibrinogen is essential for successful pregnancy. Fibrin deposition is also associated with infection, where it protects against IFNG-mediated hemorrhage. May also facilitate the antibacterial immune response via both innate and T-cell mediated pathways. This Rangifer tarandus (Reindeer) protein is Fibrinogen beta chain (FGB).